Reading from the N-terminus, the 385-residue chain is Mannitol-1-phosphate 5-dehydrogenase (385 aa).

3-14 contacts NAD(+); sequence ALHFGAGNIGRG.

This sequence belongs to the mannitol dehydrogenase family.

It catalyses the reaction D-mannitol 1-phosphate + NAD(+) = beta-D-fructose 6-phosphate + NADH + H(+). In Pasteurella multocida (strain Pm70), this protein is Mannitol-1-phosphate 5-dehydrogenase.